Here is a 330-residue protein sequence, read N- to C-terminus: Autoinducer 2 import system permease protein LsrD (330 aa).

Topologically, residues 1-4 (MRIR) are cytoplasmic. A helical transmembrane segment spans residues 5–25 (YGWELALAALLVIEIVAFGAI). The Periplasmic portion of the chain corresponds to 26–42 (NPRMLDLNMLLFSTSDF). Residues 43 to 63 (ICIGIVALPLTMVIVSGGIDI) form a helical membrane-spanning segment. The Cytoplasmic portion of the chain corresponds to 64–67 (SFGS). The next 2 helical transmembrane spans lie at 68–88 (TIGL…PMPL) and 89–109 (AILL…GLII). The Cytoplasmic segment spans residues 110 to 115 (YTKVNP). Residues 116–136 (LVITLGTLYLFAGSALLLSGM) traverse the membrane as a helical segment. The Periplasmic portion of the chain corresponds to 137 to 159 (AGATGYEGIGGFPMAFTDFANLD). A helical membrane pass occupies residues 160-180 (VLGLPVPLIIFLICLLVFWLW). Residues 181-209 (LHKTHAGRNVFLIGQSPRVALYSAIPVNR) lie on the Cytoplasmic side of the membrane. A helical membrane pass occupies residues 210 to 230 (TLCALYAMTGLASAVAAVLLV). The Periplasmic segment spans residues 231–237 (SYFGSAR). Transmembrane regions (helical) follow at residues 238–258 (SDLG…GGAN) and 259–279 (IYGG…VGYL). At 280–285 (QQGLQM) the chain is on the periplasmic side. A helical transmembrane segment spans residues 286–306 (AGVPNQVSSALSGALLIVVVV). Over 307–330 (GRSVSLHRQQIKEWLARRANNPLP) the chain is Cytoplasmic.

Belongs to the binding-protein-dependent transport system permease family. AraH/RbsC subfamily. The complex is composed of two ATP-binding proteins (LsrA), two transmembrane proteins (LsrC and LsrD) and a solute-binding protein (LsrB).

Its subcellular location is the cell inner membrane. Functionally, part of the ABC transporter complex LsrABCD involved in autoinducer 2 (AI-2) import. Probably responsible for the translocation of the substrate across the membrane. The sequence is that of Autoinducer 2 import system permease protein LsrD (lsrD) from Shigella flexneri serotype 5b (strain 8401).